A 147-amino-acid chain; its full sequence is Small ribosomal subunit protein uS12 (147 aa).

It belongs to the universal ribosomal protein uS12 family. In terms of assembly, part of the 30S ribosomal subunit.

In terms of biological role, with S4 and S5 plays an important role in translational accuracy. Located at the interface of the 30S and 50S subunits. This is Small ribosomal subunit protein uS12 from Hyperthermus butylicus (strain DSM 5456 / JCM 9403 / PLM1-5).